A 211-amino-acid polypeptide reads, in one-letter code: Pyridoxine/pyridoxamine 5'-phosphate oxidase (211 aa).

Substrate-binding positions include 7–10 (RREY) and lysine 65. Residues 60 to 65 (RIVLLK), 75 to 76 (YT), arginine 81, lysine 82, and glutamine 104 each bind FMN. 3 residues coordinate substrate: tyrosine 122, arginine 126, and serine 130. FMN is bound by residues 139-140 (QS) and tryptophan 184. 190 to 192 (RLH) contacts substrate. An FMN-binding site is contributed by arginine 194.

The protein belongs to the pyridoxamine 5'-phosphate oxidase family. In terms of assembly, homodimer. Requires FMN as cofactor.

The enzyme catalyses pyridoxamine 5'-phosphate + O2 + H2O = pyridoxal 5'-phosphate + H2O2 + NH4(+). It catalyses the reaction pyridoxine 5'-phosphate + O2 = pyridoxal 5'-phosphate + H2O2. Its pathway is cofactor metabolism; pyridoxal 5'-phosphate salvage; pyridoxal 5'-phosphate from pyridoxamine 5'-phosphate: step 1/1. It functions in the pathway cofactor metabolism; pyridoxal 5'-phosphate salvage; pyridoxal 5'-phosphate from pyridoxine 5'-phosphate: step 1/1. Its function is as follows. Catalyzes the oxidation of either pyridoxine 5'-phosphate (PNP) or pyridoxamine 5'-phosphate (PMP) into pyridoxal 5'-phosphate (PLP). The sequence is that of Pyridoxine/pyridoxamine 5'-phosphate oxidase from Vibrio atlanticus (strain LGP32) (Vibrio splendidus (strain Mel32)).